The following is a 490-amino-acid chain: uncharacterized protein (490 aa).

A helical membrane pass occupies residues V27–I47.

The protein resides in the membrane. This is an uncharacterized protein from Borreliella burgdorferi (strain ATCC 35210 / DSM 4680 / CIP 102532 / B31) (Borrelia burgdorferi).